We begin with the raw amino-acid sequence, 237 residues long: Lectin (237 aa).

2 residues coordinate Mn(2+): E8 and D10. Positions 10, 12, 14, and 19 each coordinate Ca(2+). Positions 12 and 14 each coordinate a carbohydrate. D19 and H24 together coordinate Mn(2+). 98–100 contacts a carbohydrate; that stretch reads GLY. D208 provides a ligand contact to Ca(2+). Residues G227 and R228 each coordinate a carbohydrate.

It belongs to the leguminous lectin family. Homotetramer; dimer of dimers. In terms of processing, concanavalin A-like lectins of the Diocleinae subtribe undergo proteolytic processing referred to as circular permutation. The propeptide is split into an N-terminal and a C-terminal part, the gamma and beta chain, respectively. These are then religated in beta-gamma order to form the mature alpha chain. The beta and gamma chains can often be detected in cell extracts. Residues 1-118 of the mature chain, as displayed here, probably constitute the beta chain in the propeptide, residues 119-237 the gamma chain.

Functionally, D-mannose/D-glucose-binding lectin with hemagglutinating activity towards rabbit and human erythrocytes. In rats, induces dose-dependent paw edema. Has low cytotoxicity against Artemisia sp. This is Lectin from Macropsychanthus comosus (Sea purse).